The chain runs to 109 residues: Phosphocarrier protein HPr (109 aa).

Residues 22–109 (ELSAVFTIRN…EVFNSGFGEL (88 aa)) form the HPr domain. Catalysis depends on His-36, which acts as the Pros-phosphohistidine intermediate.

Belongs to the HPr family.

The protein localises to the cytoplasm. Functionally, general (non sugar-specific) component of the phosphoenolpyruvate-dependent sugar phosphotransferase system (sugar PTS). This major carbohydrate active-transport system catalyzes the phosphorylation of incoming sugar substrates concomitantly with their translocation across the cell membrane. The phosphoryl group from phosphoenolpyruvate (PEP) is transferred to the phosphoryl carrier protein HPr by enzyme I. Phospho-HPr then transfers it to the PTS EIIA domain. The sequence is that of Phosphocarrier protein HPr (ptsH) from Chlamydia trachomatis serovar D (strain ATCC VR-885 / DSM 19411 / UW-3/Cx).